The primary structure comprises 684 residues: MTAPNPSSLVAPIRVPAGTTAGTAVREAGLPGKGEDAIVVVRVDGALKDLSWTPESDTEVEPVAANTEDGRSVIRHSAAHVLAQAVQELFPQAKLGIGPPITDGFYYDFGIDHAFTPEDLTALEKKMKQIIKEGQRFSRRVYESVEEAQAELANEPFKLELVSDKSGADDPEVMEVGGDELSAYDNLNPRTGEREWFDLCRGPHIPTTKHIPAFRLTRSSAAYWRGNQANASMQRVYGTAWESQEALDKHLELLEEAQRRDHRKLGVELDLFSFPDEIGSGLPVFHPKGGIVRKELEDYSRAKHTAAGYEFVNTPHITKENLYQTSGHLDWYSDGMFPPMHIDAELNEDGTVRKPGQNYYLKPMNCPMHHLIYRARGRSYRELPLRLFEFGSVYRYEKSGVVHGLTRVRGMTQDDAHIYTTREQMHEELTSLLRFVLDLLSDYGLDDFYLELSTKDEAKFVGSDEVWEEATKTLEQVALDSGLQLVPDPGGAAFYGPKISVQAKDALGRSWQMSTIQLDFNMPERFNLEYTAADGTRKQPVLIHRALFGSIERFFGVLTEHYAGAFPAWLSPVQAVGIPIADAHAPYLNDIVSQLKAQGIRAEVDSSDDRMNKKIVNHTNQRVPFLLLAGDRDVEAGAVSFRFRDRTQVNGVPRDEAVAAIVDWVNRRENVSPTAELLKLGASD.

Residues 1-64 (MTAPNPSSLV…ESDTEVEPVA (64 aa)) enclose the TGS domain. The segment at 261 to 567 (DHRKLGVELD…LTEHYAGAFP (307 aa)) is catalytic. The Zn(2+) site is built by cysteine 366, histidine 417, and histidine 544.

The protein belongs to the class-II aminoacyl-tRNA synthetase family. In terms of assembly, homodimer. Zn(2+) serves as cofactor.

The protein resides in the cytoplasm. The catalysed reaction is tRNA(Thr) + L-threonine + ATP = L-threonyl-tRNA(Thr) + AMP + diphosphate + H(+). Its function is as follows. Catalyzes the attachment of threonine to tRNA(Thr) in a two-step reaction: L-threonine is first activated by ATP to form Thr-AMP and then transferred to the acceptor end of tRNA(Thr). Also edits incorrectly charged L-seryl-tRNA(Thr). The protein is Threonine--tRNA ligase of Mycobacteroides abscessus (strain ATCC 19977 / DSM 44196 / CCUG 20993 / CIP 104536 / JCM 13569 / NCTC 13031 / TMC 1543 / L948) (Mycobacterium abscessus).